A 112-amino-acid polypeptide reads, in one-letter code: Protein ECM19 (112 aa).

A helical transmembrane segment spans residues 35–57 (NTLDMVTIGIACLVGVYTGTRFF). Positions 82–112 (EDGNLLKVTPSLSSTPAAPPTPPTPPTPPQQ) are disordered. Positions 98–112 (AAPPTPPTPPTPPQQ) are enriched in pro residues.

It is found in the mitochondrion membrane. Functionally, may be involved in cell wall organization and biogenesis. This is Protein ECM19 (ECM19) from Saccharomyces cerevisiae (strain ATCC 204508 / S288c) (Baker's yeast).